Consider the following 156-residue polypeptide: Small ribosomal subunit protein uS7 (156 aa).

It belongs to the universal ribosomal protein uS7 family. In terms of assembly, part of the 30S ribosomal subunit. Contacts proteins S9 and S11.

Its function is as follows. One of the primary rRNA binding proteins, it binds directly to 16S rRNA where it nucleates assembly of the head domain of the 30S subunit. Is located at the subunit interface close to the decoding center, probably blocks exit of the E-site tRNA. In Rubrobacter xylanophilus (strain DSM 9941 / JCM 11954 / NBRC 16129 / PRD-1), this protein is Small ribosomal subunit protein uS7.